Here is a 122-residue protein sequence, read N- to C-terminus: Large ribosomal subunit protein uL14c (122 aa).

The protein belongs to the universal ribosomal protein uL14 family. In terms of assembly, part of the 50S ribosomal subunit.

The protein resides in the plastid. The protein localises to the chloroplast. Binds to 23S rRNA. The sequence is that of Large ribosomal subunit protein uL14c from Nicotiana sylvestris (Wood tobacco).